Here is a 1051-residue protein sequence, read N- to C-terminus: Eukaryotic translation initiation factor 3 subunit A (1051 aa).

Positions 92–121 form a coiled coil; it reads LKKFIELAEKKVTEAQAKADEIQSSLESAA. The region spanning 339–523 is the PCI domain; sequence MTKAASFVLL…GVLTFDTDIF (185 aa). Residues 608–905 adopt a coiled-coil conformation; sequence RVLIEKKKEA…EAEARRAARK (298 aa). 4 stretches are compositionally biased toward basic and acidic residues: residues 617-632, 642-664, 794-901, and 916-926; these read AATD…EETR, EAEK…RDEQ, KEVS…EARR, and AELERPVERTA. Disordered stretches follow at residues 617-664 and 794-1051; these read AATD…RDEQ and KEVS…QQQQ. Composition is skewed to low complexity over residues 948-961 and 1010-1039; these read KEAA…AAAE and SSSS…SPAP.

This sequence belongs to the eIF-3 subunit A family. In terms of assembly, component of the eukaryotic translation initiation factor 3 (eIF-3) complex.

The protein localises to the cytoplasm. Functionally, RNA-binding component of the eukaryotic translation initiation factor 3 (eIF-3) complex, which is involved in protein synthesis of a specialized repertoire of mRNAs and, together with other initiation factors, stimulates binding of mRNA and methionyl-tRNAi to the 40S ribosome. The eIF-3 complex specifically targets and initiates translation of a subset of mRNAs involved in cell proliferation. The chain is Eukaryotic translation initiation factor 3 subunit A (tif32) from Aspergillus fumigatus (strain CBS 144.89 / FGSC A1163 / CEA10) (Neosartorya fumigata).